Reading from the N-terminus, the 276-residue chain is Prohibitin 1 (276 aa).

It belongs to the prohibitin family.

In terms of biological role, required for larval metabolism or for the progression of the larva into a pupa. This Drosophila melanogaster (Fruit fly) protein is Prohibitin 1.